Consider the following 243-residue polypeptide: Terpene cyclase nodB (243 aa).

The next 3 membrane-spanning stretches (helical) occupy residues 19-39 (ISDI…AGMI), 50-70 (MAPL…LIYP), and 75-95 (IEQG…YTAI). Asn-111 is a glycosylation site (N-linked (GlcNAc...) asparagine). Helical transmembrane passes span 112–132 (ITLI…ALAA), 134–154 (IGPA…LSVG), 169–189 (SYTL…FAIL), and 205–225 (LVLW…ICLW).

It belongs to the paxB family.

It is found in the membrane. The protein operates within secondary metabolite biosynthesis. In terms of biological role, terpene cyclase; part of the gene cluster that mediates the biosynthesis of the indole diterpenes nodulisporic acids (NA). Nodulisporic acid A (NAA) and its chemically modified derivatives are of particular significance because of their highly potent insecticidal activity against blood-feeding arthropods and lack of observable adverse effects on mammals, in particular the tremogenicity associated with the paspaline-derived IDTs is not observed. The geranylgeranyl diphosphate (GGPP) synthase ggs1, localized outside of the cluster, is proposed to catalyze the first step in nodulisporic acid biosynthesis via conversion of farnesyl pyrophosphate and isopentyl pyrophosphate into geranylgeranyl pyrophosphate (GGPP). Condensation of indole-3-glycerol phosphate with GGPP by the prenyl transferase nodC then forms 3-geranylgeranylindole (3-GGI). Epoxidation by the FAD-dependent monooxygenase nodM leads to a single-epoxidized-GGI that is substrate of the terpene cyclase nodB for cyclization to yield emindole SB. The terminal methyl carbon, C28, of emindole SB is then oxidized by the cytochrome P450 monooxygenase nodW to produce nodulisporic acid F (NAF), the pentacyclic core of NAA. NAF is converted to nodulisporic acid E (NAE) via prenylation. This step is probably performed by one of the indole diterpene prenyltransferases nodD1 or nodD2. Several oxidation steps performed by the FAD-linked oxidoreductase nodO and one of the cytochrome P450 monooxygenase nodR, nodX or nodZ further convert NAE to nodulisporic acid D (NAD). NAD is substrate of cytochrome P450 monooxygenase nodJ to produce the precursor of nodulisporic acid C (NAC), converted to NAC by one of the indole diterpene prenyltransferases nodD1 or nodD2. The FAD-dependent monooxygenase nodY2 then oxidizes NAC to nodulisporic acid B (NAB). Finally NAB is converted to NAA by one of the cytochrome P450 monooxygenases nodR, nodX or nodZ. The sequence is that of Terpene cyclase nodB from Hypoxylon pulicicidum.